The following is a 418-amino-acid chain: UDP-N-acetylglucosamine 1-carboxyvinyltransferase (418 aa).

Phosphoenolpyruvate is bound at residue Lys22–Asn23. UDP-N-acetyl-alpha-D-glucosamine is bound at residue Arg92. The active-site Proton donor is Cys116. At Cys116 the chain carries 2-(S-cysteinyl)pyruvic acid O-phosphothioketal. UDP-N-acetyl-alpha-D-glucosamine-binding positions include Arg121–Leu125, Asp305, and Ile327.

It belongs to the EPSP synthase family. MurA subfamily.

The protein resides in the cytoplasm. The enzyme catalyses phosphoenolpyruvate + UDP-N-acetyl-alpha-D-glucosamine = UDP-N-acetyl-3-O-(1-carboxyvinyl)-alpha-D-glucosamine + phosphate. It functions in the pathway cell wall biogenesis; peptidoglycan biosynthesis. Cell wall formation. Adds enolpyruvyl to UDP-N-acetylglucosamine. This Acidiphilium cryptum (strain JF-5) protein is UDP-N-acetylglucosamine 1-carboxyvinyltransferase.